Here is a 64-residue protein sequence, read N- to C-terminus: Large ribosomal subunit protein bL35 (64 aa).

Positions 1-15 (MPKNKTHSGTAKRFR) are enriched in basic residues. The tract at residues 1-27 (MPKNKTHSGTAKRFRVTGSGKLRREQA) is disordered.

This sequence belongs to the bacterial ribosomal protein bL35 family.

In Saccharopolyspora erythraea (strain ATCC 11635 / DSM 40517 / JCM 4748 / NBRC 13426 / NCIMB 8594 / NRRL 2338), this protein is Large ribosomal subunit protein bL35.